A 91-amino-acid chain; its full sequence is UPF0147 protein DKAM_0139 (91 aa).

It belongs to the UPF0147 family.

The polypeptide is UPF0147 protein DKAM_0139 (Desulfurococcus amylolyticus (strain DSM 18924 / JCM 16383 / VKM B-2413 / 1221n) (Desulfurococcus kamchatkensis)).